The chain runs to 56 residues: Large ribosomal subunit protein eL40 (56 aa).

The protein belongs to the eukaryotic ribosomal protein eL40 family.

The polypeptide is Large ribosomal subunit protein eL40 (Metallosphaera sedula (strain ATCC 51363 / DSM 5348 / JCM 9185 / NBRC 15509 / TH2)).